The following is a 378-amino-acid chain: Ribosomal RNA large subunit methyltransferase G (378 aa).

Belongs to the methyltransferase superfamily. RlmG family.

Its subcellular location is the cytoplasm. It carries out the reaction guanosine(1835) in 23S rRNA + S-adenosyl-L-methionine = N(2)-methylguanosine(1835) in 23S rRNA + S-adenosyl-L-homocysteine + H(+). In terms of biological role, specifically methylates the guanine in position 1835 (m2G1835) of 23S rRNA. The polypeptide is Ribosomal RNA large subunit methyltransferase G (Shewanella baltica (strain OS185)).